Reading from the N-terminus, the 465-residue chain is MFTRVANFCRKVLSREESEAEQAVARPQVTVIPREQHAISRKDISENALKVMYRLNKAGYEAWLVGGGVRDLLLGKKPKDFDVTTNATPEQVRKLFRNCRLVGRRFRLAHVMFGPEIIEVATFRGHHEGNVSDRTTSQRGQNGMLLRDNIFGSIEEDAQRRDFTINSLYYSVADFTVRDYVGGMKDLKDGVIRLIGNPETRYREDPVRMLRAVRFAAKLGMRISPETAEPIPRLATLLNDIPPARLFEESLKLLQAGYGYETYKLLCEYHLFQPLFPTITRYFTENGDSPMERIIEQVLKNTDTRIHNDMRVNPAFLFAAMFWYPLLETAQKIAQESGLTYHDAFALAMNDVLDEACRSLAIPKRLTTLTRDIWQLQLRMSRRQGKRAWKLLEHPKFRAAYDLLALRAEVERNAELQRLVKWWGEFQVSAPPDQKGMLNELDEEPSPRRRTRRPRKRAPRREGTA.

Residues Asp-80, Asp-82, and Asp-162 contribute to the active site. The disordered stretch occupies residues 429–465 (SAPPDQKGMLNELDEEPSPRRRTRRPRKRAPRREGTA). The segment covering 448–459 (RRRTRRPRKRAP) has biased composition (basic residues).

It belongs to the tRNA nucleotidyltransferase/poly(A) polymerase family.

The catalysed reaction is RNA(n) + ATP = RNA(n)-3'-adenine ribonucleotide + diphosphate. Its function is as follows. Adds poly(A) tail to the 3' end of many RNAs, which usually targets these RNAs for decay. Plays a significant role in the global control of gene expression, through influencing the rate of transcript degradation, and in the general RNA quality control. This Escherichia coli O157:H7 protein is Poly(A) polymerase I.